The sequence spans 1296 residues: MPFVNKQFNYKDPVNGVDIAYIKIPNAGQMQPVKAFKIHNKIWVIPERDTFTNPEEGDLNPPPEAKQVPVSYYDSTYLSTDNEKDNYLKGVTKLFERIYSTDLGRMLLTSIVRGIPFWGGSTIDTELKVIDTNCINVIQPDGSYRSEELNLVIIGPSADIIQFECKSFGHDVLNLTRNGYGSTQYIRFSPDFTFGFEESLEVDTNPLLGAGKFATDPAVTLAHELIHAEHRLYGIAINPNRVFKVNTNAYYEMSGLEVSFEELRTFGGHDAKFIDSLQENEFRLYYYNKFKDVASTLNKAKSIIGTTASLQYMKNVFKEKYLLSEDTSGKFSVDKLKFDKLYKMLTEIYTEDNFVNFFKVINRKTYLNFDKAVFRINIVPDENYTIKDGFNLKGANLSTNFNGQNTEINSRNFTRLKNFTGLFEFYKLLCVRGIIPFKTKSLDEGYNKALNDLCIKVNNWDLFFSPSEDNFTNDLDKVEEITADTNIEAAEENISLDLIQQYYLTFDFDNEPENISIENLSSDIIGQLEPMPNIERFPNGKKYELDKYTMFHYLRAQEFEHGDSRIILTNSAEEALLKPNVAYTFFSSKYVKKINKAVEAFMFLNWAEELVYDFTDETNEVTTMDKIADITIIVPYIGPALNIGNMLSKGEFVEAIIFTGVVAMLEFIPEYALPVFGTFAIVSYIANKVLTVQTINNALSKRNEKWDEVYKYTVTNWLAKVNTQIDLIREKMKKALENQAEATKAIINYQYNQYTEEEKNNINFNIDDLSSKLNESINSAMININKFLDQCSVSYLMNSMIPYAVKRLKDFDASVRDVLLKYIYDNRGTLVLQVDRLKDEVNNTLSADIPFQLSKYVDNKKLLSTFTEYIKNIVNTSILSIVYKKDDLIDLSRYGAKINIGDRVYYDSIDKNQIKLINLESSTIEVILKNAIVYNSMYENFSTSFWIKIPKYFSKINLNNEYTIINCIENNSGWKVSLNYGEIIWTLQDNKQNIQRVVFKYSQMVNISDYINRWIFVTITNNRLTKSKIYINGRLIDQKPISNLGNIHASNKIMFKLDGCRDPRRYIMIKYFNLFDKELNEKEIKDLYDSQSNSGILKDFWGNYLQYDKPYYMLNLFDPNKYVDVNNIGIRGYMYLKGPRGSVVTTNIYLNSTLYEGTKFIIKKYASGNEDNIVRNNDRVYINVVVKNKEYRLATNASQAGVEKILSALEIPDVGNLSQVVVMKSKDDQGIRNKCKMNLQDNNGNDIGFIGFHLYDNIAKLVASNWYNRQVGKASRTFGCSWEFIPVDDGWGESSL.

His-223 serves as a coordination point for Zn(2+). Glu-224 is a catalytic residue. 2 residues coordinate Zn(2+): His-227 and Glu-262. A disulfide bond links Cys-430 and Cys-454. The segment at 449 to 870 (ALNDLCIKVN…KLLSTFTEYI (422 aa)) is translocation domain (TD). Positions 492–545 (ENISLDLIQQYYLTFDFDNEPENISIENLSSDIIGQLEPMPNIERFPNGKKYEL) are belt; not required for channel formation. 2 helical membrane-spanning segments follow: residues 627–647 (IADI…GNML) and 656–676 (IIFT…LPVF). Positions 871–1092 (KNIVNTSILS…EIKDLYDSQS (222 aa)) are N-terminus of receptor binding domain (N-RBD). Positions 1093–1296 (NSGILKDFWG…VDDGWGESSL (204 aa)) are C-terminus of receptor binding domain (C-RBD). Cys-1235 and Cys-1280 are disulfide-bonded. The short motif at 1264–1267 (SNWY) is the Host ganglioside-binding motif element.

It belongs to the peptidase M27 family. In terms of assembly, heterodimer; disulfide-linked heterodimer of a light chain (LC) and a heavy chain (HC). Interacts with host synaptic vesicle glycoprotein 2C (SV2C) which serves as a coreceptor. Also binds host receptor proteins SV2A and SV2B; glycosylation of host protein greatly improves the interaction. Part of a crude toxin extract that includes BoNTA2/NTNH, P47, OrfX2 and OrfX3; OrfX1 was not detected. A purified toxin complex has NTNH and dichain BoNTA2. Forms a highly interlocked heterodimer with NTNH at pH 6.0, called the minimally functional progenitor toxin complex (M-PTC). Zn(2+) is required as a cofactor.

Its subcellular location is the secreted. The protein resides in the host cytoplasm. It localises to the host cytosol. It is found in the host synapse. The protein localises to the host presynaptic cell membrane. Its subcellular location is the host cytoplasmic vesicle. The protein resides in the host secretory vesicle. It localises to the host synaptic vesicle membrane. It carries out the reaction Limited hydrolysis of proteins of the neuroexocytosis apparatus, synaptobrevins, SNAP25 or syntaxin. No detected action on small molecule substrates.. Its activity is regulated as follows. Protease activity of LC inhibited by arginine hydroxamate. In terms of biological role, botulinum toxin causes flaccid paralysis by inhibiting neurotransmitter (acetylcholine) release from the presynaptic membranes of nerve terminals of eukaryotic host skeletal and autonomic nervous system, with frequent heart or respiratory failure. Precursor of botulinum neurotoxin A2 which has 2 coreceptors; complex polysialylated gangliosides found on neural tissue and specific membrane-anchored proteins found in synaptic vesicles. Receptor proteins are exposed on host presynaptic cell membrane during neurotransmitter release, when the toxin heavy chain (HC) binds to them. Upon synaptic vesicle recycling the toxin is taken up via the endocytic pathway. When the pH of the toxin-containing endosome drops a structural rearrangement occurs so that the N-terminus of the HC forms pores that allows the light chain (LC) to translocate into the cytosol. Once in the cytosol the disulfide bond linking the 2 subunits is reduced and LC cleaves its target protein on synaptic vesicles, preventing their fusion with the cytoplasmic membrane and thus neurotransmitter release. Its function is as follows. Has proteolytic activity. After translocation into the eukaryotic host cytosol, LC hydrolyzes the 197-Gln-|-Arg-198 bond in SNAP25, blocking neurotransmitter release. Functionally, responsible for host epithelial cell transcytosis, host nerve cell targeting and translocation of light chain (LC) into host cytosol. Composed of 3 subdomains; the translocation domain (TD), and N-terminus and C-terminus of the receptor-binding domain (RBD). The RBD is responsible for the adherence of the toxin to the cell surface. It simultaneously recognizes 2 coreceptors; polysialated gangliosides and the receptor protein SV2 in close proximity on host synaptic vesicles. The N-terminus of the TD wraps an extended belt around the perimeter of the LC, protecting Zn(2+) in the active site; it may also prevent premature LC dissociation from the translocation channel and to protect toxin prior to translocation. The TD inserts into synaptic vesicle membrane to allow translocation into the host cytosol. The polypeptide is Botulinum neurotoxin type A2 (Clostridium botulinum (strain Kyoto / Type A2)).